The sequence spans 434 residues: Eukaryotic translation initiation factor 3 subunit E-2 (434 aa).

The PCI domain maps to 219–392 (FFNHPKGRDL…GHVVMGTQPL (174 aa)).

The protein belongs to the eIF-3 subunit E family. As to quaternary structure, component of the eukaryotic translation initiation factor 3 (eIF-3) complex. The eIF-3 complex interacts with pix. Interacts with mxt.

It localises to the cytoplasm. Functionally, component of the eukaryotic translation initiation factor 3 (eIF-3) complex, which is involved in protein synthesis of a specialized repertoire of mRNAs and, together with other initiation factors, stimulates binding of mRNA and methionyl-tRNAi to the 40S ribosome. The eIF-3 complex specifically targets and initiates translation of a subset of mRNAs involved in cell proliferation. In Drosophila willistoni (Fruit fly), this protein is Eukaryotic translation initiation factor 3 subunit E-2 (eIF3-S6-2).